Here is a 227-residue protein sequence, read N- to C-terminus: Small ribosomal subunit protein uS3m (227 aa).

It belongs to the universal ribosomal protein uS3 family. Component of the mitochondrial small ribosomal subunit (mt-SSU). Mature yeast 74S mitochondrial ribosomes consist of a small (37S) and a large (54S) subunit. The 37S small subunit contains a 15S ribosomal RNA (15S mt-rRNA) and at least 32 different proteins. The 54S large subunit contains a 21S rRNA (21S mt-rRNA) and at least 45 different proteins. uS3m, uS4m and uS5m form the narrow entry site of the mRNA channel.

It localises to the mitochondrion. In terms of biological role, essential for mitochondrial protein synthesis and required for the maturation of small ribosomal subunits. Functionally, component of the mitochondrial ribosome (mitoribosome), a dedicated translation machinery responsible for the synthesis of mitochondrial genome-encoded proteins, including at least some of the essential transmembrane subunits of the mitochondrial respiratory chain. The mitoribosomes are attached to the mitochondrial inner membrane and translation products are cotranslationally integrated into the membrane. uS3m is essential for mitochondrial protein synthesis and required for the maturation of small ribosomal subunits. This chain is Small ribosomal subunit protein uS3m (var1), found in Schizosaccharomyces pombe (strain 972 / ATCC 24843) (Fission yeast).